Reading from the N-terminus, the 454-residue chain is Bifunctional protein GlmU (454 aa).

The interval 1–226 (MALNVVILAA…AIEVEGANNR (226 aa)) is pyrophosphorylase. UDP-N-acetyl-alpha-D-glucosamine-binding positions include 8 to 11 (LAAG), K22, Q73, 78 to 79 (GT), 100 to 102 (YGD), G137, E151, N166, and N224. D102 is a Mg(2+) binding site. Residue N224 participates in Mg(2+) binding. A linker region spans residues 227 to 247 (VQLAQLERAYQARAAEKLMLE). The segment at 248 to 454 (GANLRDPARI…GWTRPVKQKK (207 aa)) is N-acetyltransferase. Residues R330 and K348 each coordinate UDP-N-acetyl-alpha-D-glucosamine. H360 serves as the catalytic Proton acceptor. Residues Y363 and N374 each coordinate UDP-N-acetyl-alpha-D-glucosamine. Acetyl-CoA is bound by residues A377, 383–384 (NY), S402, A420, and R437.

It in the N-terminal section; belongs to the N-acetylglucosamine-1-phosphate uridyltransferase family. In the C-terminal section; belongs to the transferase hexapeptide repeat family. In terms of assembly, homotrimer. Mg(2+) serves as cofactor.

The protein localises to the cytoplasm. The enzyme catalyses alpha-D-glucosamine 1-phosphate + acetyl-CoA = N-acetyl-alpha-D-glucosamine 1-phosphate + CoA + H(+). It carries out the reaction N-acetyl-alpha-D-glucosamine 1-phosphate + UTP + H(+) = UDP-N-acetyl-alpha-D-glucosamine + diphosphate. The protein operates within nucleotide-sugar biosynthesis; UDP-N-acetyl-alpha-D-glucosamine biosynthesis; N-acetyl-alpha-D-glucosamine 1-phosphate from alpha-D-glucosamine 6-phosphate (route II): step 2/2. Its pathway is nucleotide-sugar biosynthesis; UDP-N-acetyl-alpha-D-glucosamine biosynthesis; UDP-N-acetyl-alpha-D-glucosamine from N-acetyl-alpha-D-glucosamine 1-phosphate: step 1/1. It participates in bacterial outer membrane biogenesis; LPS lipid A biosynthesis. Functionally, catalyzes the last two sequential reactions in the de novo biosynthetic pathway for UDP-N-acetylglucosamine (UDP-GlcNAc). The C-terminal domain catalyzes the transfer of acetyl group from acetyl coenzyme A to glucosamine-1-phosphate (GlcN-1-P) to produce N-acetylglucosamine-1-phosphate (GlcNAc-1-P), which is converted into UDP-GlcNAc by the transfer of uridine 5-monophosphate (from uridine 5-triphosphate), a reaction catalyzed by the N-terminal domain. The polypeptide is Bifunctional protein GlmU (Shewanella loihica (strain ATCC BAA-1088 / PV-4)).